Here is a 138-residue protein sequence, read N- to C-terminus: Acidic phospholipase A2 1 (138 aa).

A signal peptide spans methionine 1–glycine 16. Disulfide bonds link cysteine 42–cysteine 131, cysteine 44–cysteine 60, cysteine 59–cysteine 111, cysteine 65–cysteine 138, cysteine 66–cysteine 104, cysteine 73–cysteine 97, and cysteine 91–cysteine 102. 3 residues coordinate Ca(2+): tyrosine 43, glycine 45, and glycine 47. Residue histidine 63 is part of the active site. Residue aspartate 64 participates in Ca(2+) binding. The active site involves aspartate 105.

As to quaternary structure, monomer. Requires Ca(2+) as cofactor. As to expression, expressed by the venom gland.

It localises to the secreted. The catalysed reaction is a 1,2-diacyl-sn-glycero-3-phosphocholine + H2O = a 1-acyl-sn-glycero-3-phosphocholine + a fatty acid + H(+). In terms of biological role, snake venom phospholipase that inhibits ADP- and collagen-induced human platelet aggregation. This inhibition is completely inhibited by abolition of catalytic activity in case of collagen as inducer and partially inhibited in case of ADP as inducer. PLA2 catalyzes the calcium-dependent hydrolysis of the 2-acyl groups in 3-sn-phosphoglycerides. This Macrovipera lebetinus (Levantine viper) protein is Acidic phospholipase A2 1.